The following is a 364-amino-acid chain: Spermidine/putrescine import ATP-binding protein PotA (364 aa).

Residues Ile6–Ile236 form the ABC transporter domain. Residue Gly38–Thr45 participates in ATP binding.

Belongs to the ABC transporter superfamily. Spermidine/putrescine importer (TC 3.A.1.11.1) family. In terms of assembly, the complex is composed of two ATP-binding proteins (PotA), two transmembrane proteins (PotB and PotC) and a solute-binding protein (PotD).

It is found in the cell inner membrane. It catalyses the reaction ATP + H2O + polyamine-[polyamine-binding protein]Side 1 = ADP + phosphate + polyamineSide 2 + [polyamine-binding protein]Side 1.. Its function is as follows. Part of the ABC transporter complex PotABCD involved in spermidine/putrescine import. Responsible for energy coupling to the transport system. This Legionella pneumophila (strain Lens) protein is Spermidine/putrescine import ATP-binding protein PotA.